Reading from the N-terminus, the 689-residue chain is Glycine--tRNA ligase beta subunit (689 aa).

This sequence belongs to the class-II aminoacyl-tRNA synthetase family. In terms of assembly, tetramer of two alpha and two beta subunits.

It is found in the cytoplasm. It catalyses the reaction tRNA(Gly) + glycine + ATP = glycyl-tRNA(Gly) + AMP + diphosphate. This is Glycine--tRNA ligase beta subunit from Escherichia coli O127:H6 (strain E2348/69 / EPEC).